A 316-amino-acid chain; its full sequence is ATP synthase gamma chain (316 aa).

The protein belongs to the ATPase gamma chain family. F-type ATPases have 2 components, CF(1) - the catalytic core - and CF(0) - the membrane proton channel. CF(1) has five subunits: alpha(3), beta(3), gamma(1), delta(1), epsilon(1). CF(0) has three main subunits: a, b and c.

It is found in the cellular thylakoid membrane. In terms of biological role, produces ATP from ADP in the presence of a proton gradient across the membrane. The gamma chain is believed to be important in regulating ATPase activity and the flow of protons through the CF(0) complex. This chain is ATP synthase gamma chain, found in Synechococcus elongatus (strain ATCC 33912 / PCC 7942 / FACHB-805) (Anacystis nidulans R2).